A 420-amino-acid chain; its full sequence is UDP-N-acetylglucosamine 1-carboxyvinyltransferase (420 aa).

23 to 24 (KN) lines the phosphoenolpyruvate pocket. R92 provides a ligand contact to UDP-N-acetyl-alpha-D-glucosamine. C116 acts as the Proton donor in catalysis. C116 carries the 2-(S-cysteinyl)pyruvic acid O-phosphothioketal modification. UDP-N-acetyl-alpha-D-glucosamine contacts are provided by residues 121-125 (RPVDL), 161-164 (KVSV), D306, and I328.

Belongs to the EPSP synthase family. MurA subfamily.

It is found in the cytoplasm. It catalyses the reaction phosphoenolpyruvate + UDP-N-acetyl-alpha-D-glucosamine = UDP-N-acetyl-3-O-(1-carboxyvinyl)-alpha-D-glucosamine + phosphate. It functions in the pathway cell wall biogenesis; peptidoglycan biosynthesis. Cell wall formation. Adds enolpyruvyl to UDP-N-acetylglucosamine. This chain is UDP-N-acetylglucosamine 1-carboxyvinyltransferase, found in Photobacterium profundum (strain SS9).